A 1237-amino-acid chain; its full sequence is DNA polymerase III subunit alpha (1237 aa).

The protein belongs to the DNA polymerase type-C family. DnaE subfamily. DNA polymerase III contains a core (composed of alpha, epsilon and theta chains) that associates with a tau subunit. This core dimerizes to form the PolIII' complex. PolIII' associates with the gamma complex (composed of gamma, delta, delta', psi and chi chains) and with the beta chain to form the complete DNA polymerase III complex.

It is found in the cytoplasm. The catalysed reaction is DNA(n) + a 2'-deoxyribonucleoside 5'-triphosphate = DNA(n+1) + diphosphate. Functionally, DNA polymerase III is a complex, multichain enzyme responsible for most of the replicative synthesis in bacteria. This DNA polymerase also exhibits 3' to 5' exonuclease activity. The alpha chain is the DNA polymerase. This is DNA polymerase III subunit alpha (dnaE) from Chlamydia muridarum (strain MoPn / Nigg).